The sequence spans 537 residues: Probable glucomannan 4-beta-mannosyltransferase 15 (537 aa).

A helical membrane pass occupies residues 50 to 70 (FIVPLFKCIVVMCLIISLLVF). Aspartate 150 is a catalytic residue. The substrate site is built by aspartate 209 and aspartate 211. The active site involves aspartate 303. The next 4 membrane-spanning stretches (helical) occupy residues 382-402 (IVVHFFTYFFYCVILPTSVFL), 418-438 (VITLLSAIATPRSFYLVIFWV), 494-514 (EMMMGIYILCCACYDFAFGNA), and 515-535 (FLYLYLFMQATAFLISGVGFV).

The protein belongs to the glycosyltransferase 2 family. Plant cellulose synthase-like A subfamily.

It localises to the golgi apparatus membrane. The enzyme catalyses GDP-mannose + (glucomannan)n = GDP + (glucomannan)n+1.. Its function is as follows. Probable mannan synthase which consists of a 4-beta-mannosyltransferase activity on mannan using GDP-mannose. The beta-1,4-mannan product is the backbone for galactomannan synthesis by galactomannan galactosyltransferase. Galactomannan is a noncellulosic polysaccharides of plant cell wall. This is Probable glucomannan 4-beta-mannosyltransferase 15 from Arabidopsis thaliana (Mouse-ear cress).